The sequence spans 1054 residues: Translation initiation factor IF-2 (1054 aa).

Disordered stretches follow at residues 48-390 (RSKL…LDLD) and 409-458 (LARP…GTEP). Over residues 65–76 (KPPSESLPPEPP) the composition is skewed to pro residues. A compositionally biased stretch (polar residues) spans 160–169 (SEATQKPETV). Residues 179–193 (SESAAAKASGSEPSP) are compositionally biased toward low complexity. 2 stretches are compositionally biased toward pro residues: residues 221–235 (PQKA…PSEA) and 304–316 (PTRP…PPEP). The span at 365-378 (RAARVQAKRKRSRR) shows a compositional bias: basic residues. Low complexity predominate over residues 421–437 (PPAATAAPPARPRPAAR). The tr-type G domain occupies 545–718 (SRPPVVTIMG…LLVADVAELQ (174 aa)). Residues 554–561 (GHVDHGKT) are G1. 554 to 561 (GHVDHGKT) contributes to the GTP binding site. Residues 579 to 583 (GITQR) form a G2 region. The G3 stretch occupies residues 604–607 (DTPG). GTP contacts are provided by residues 604–608 (DTPGH) and 658–661 (NKID). The segment at 658 to 661 (NKID) is G4. Residues 694–696 (SAL) are G5.

Belongs to the TRAFAC class translation factor GTPase superfamily. Classic translation factor GTPase family. IF-2 subfamily.

It localises to the cytoplasm. Functionally, one of the essential components for the initiation of protein synthesis. Protects formylmethionyl-tRNA from spontaneous hydrolysis and promotes its binding to the 30S ribosomal subunits. Also involved in the hydrolysis of GTP during the formation of the 70S ribosomal complex. In Synechococcus sp. (strain JA-2-3B'a(2-13)) (Cyanobacteria bacterium Yellowstone B-Prime), this protein is Translation initiation factor IF-2.